The following is a 30-amino-acid chain: Trypsin inhibitor 7 (30 aa).

Intrachain disulfides connect Cys4-Cys21, Cys11-Cys23, and Cys17-Cys29.

It belongs to the protease inhibitor I7 (squash-type serine protease inhibitor) family.

Its subcellular location is the secreted. Functionally, strongly inhibits trypsin, weakly inhibits chymotrypsin. In Cyclanthera pedata (Achocha), this protein is Trypsin inhibitor 7.